The primary structure comprises 534 residues: Membrane protein insertase YidC (534 aa).

5 helical membrane-spanning segments follow: residues 7-27 (IIAV…SEYM), 319-339 (AIDL…LDFF), 342-362 (YVGN…LVFW), 413-433 (GGCL…QALL), and 493-513 (VMMF…SGLV).

The protein belongs to the OXA1/ALB3/YidC family. Type 1 subfamily. In terms of assembly, interacts with the Sec translocase complex via SecD. Specifically interacts with transmembrane segments of nascent integral membrane proteins during membrane integration.

It is found in the cell inner membrane. Functionally, required for the insertion and/or proper folding and/or complex formation of integral membrane proteins into the membrane. Involved in integration of membrane proteins that insert both dependently and independently of the Sec translocase complex, as well as at least some lipoproteins. Aids folding of multispanning membrane proteins. This chain is Membrane protein insertase YidC, found in Nitratidesulfovibrio vulgaris (strain ATCC 29579 / DSM 644 / CCUG 34227 / NCIMB 8303 / VKM B-1760 / Hildenborough) (Desulfovibrio vulgaris).